A 103-amino-acid polypeptide reads, in one-letter code: Co-chaperonin GroES (103 aa).

It belongs to the GroES chaperonin family. In terms of assembly, heptamer of 7 subunits arranged in a ring. Interacts with the chaperonin GroEL.

It localises to the plastid. The protein localises to the cyanelle. In terms of biological role, together with the chaperonin GroEL, plays an essential role in assisting protein folding. The GroEL-GroES system forms a nano-cage that allows encapsulation of the non-native substrate proteins and provides a physical environment optimized to promote and accelerate protein folding. GroES binds to the apical surface of the GroEL ring, thereby capping the opening of the GroEL channel. The protein is Co-chaperonin GroES of Cyanophora paradoxa.